Reading from the N-terminus, the 337-residue chain is Sorting nexin-15 (337 aa).

The PX domain occupies 1–130 (MSRQAKDDFL…EFFRGGEVTR (130 aa)). Residues R51, S53, R87, and R96 each contribute to the a 1,2-diacyl-sn-glycero-3-phospho-(1D-myo-inositol-3-phosphate) site. R105 is modified (omega-N-methylarginine). The segment at 133–156 (EVSRDLRILPPPLIPTPPPDEARL) is disordered. Positions 141-151 (LPPPLIPTPPP) are enriched in pro residues. Phosphoserine is present on residues S201 and S227. Residues 244 to 270 (LDQEPWEPGGQEEEEAEDGEPAPAYLG) are disordered. The span at 253–263 (GQEEEEAEDGE) shows a compositional bias: acidic residues. The MIT domain maps to 265–337 (APAYLGQATE…RAEMLHTHLP (73 aa)).

It belongs to the sorting nexin family. As to quaternary structure, homodimer. Interacts with SNX1, SNX2 and SNX4.

It is found in the cytoplasm. Its subcellular location is the membrane. The protein resides in the cytoplasmic vesicle membrane. Functionally, may be involved in several stages of intracellular trafficking. Overexpression of SNX15 disrupts the normal trafficking of proteins from the plasma membrane to recycling endosomes or the TGN. This is Sorting nexin-15 (Snx15) from Mus musculus (Mouse).